The following is a 284-amino-acid chain: Acetylglutamate kinase (284 aa).

Substrate contacts are provided by residues 64 to 65 (GG), Arg86, and Asn179.

The protein belongs to the acetylglutamate kinase family. ArgB subfamily.

Its subcellular location is the cytoplasm. It carries out the reaction N-acetyl-L-glutamate + ATP = N-acetyl-L-glutamyl 5-phosphate + ADP. Its pathway is amino-acid biosynthesis; L-arginine biosynthesis; N(2)-acetyl-L-ornithine from L-glutamate: step 2/4. Catalyzes the ATP-dependent phosphorylation of N-acetyl-L-glutamate. The polypeptide is Acetylglutamate kinase (Acaryochloris marina (strain MBIC 11017)).